The following is a 406-amino-acid chain: Tyrosine-protein phosphatase non-receptor type 2 (406 aa).

A Tyrosine-protein phosphatase domain is found at 5 to 275; sequence IEREFEELDA…RFSYMAIIEG (271 aa). At Tyr22 the chain carries Phosphotyrosine. Residue Ser52 is modified to Phosphoserine. Tyr68 carries the post-translational modification Phosphotyrosine. Residues Asp182, 216–222, and Gln260 contribute to the substrate site; that span reads CSAGIGR. Cys216 acts as the Phosphocysteine intermediate in catalysis. Cys216 bears the S-nitrosocysteine mark. Ser293, Ser298, Ser304, Ser320, and Ser339 each carry phosphoserine. The interval 341–406 is endoplasmic reticulum location; the sequence is ESILRKRIRE…ALVGWTLLFH (66 aa). Residues 371–406 are mediates interaction with STX17; sequence ERKRKRWLYWQPILTKMGFVSVILVGALVGWTLLFH.

The protein belongs to the protein-tyrosine phosphatase family. Non-receptor class 1 subfamily. Interacts with RMDN3. Isoform 1 interacts with TMED9. Isoform 1 interacts with STX17; dephosphorylates STX17. Interacts with ITGA1 (via cytoplasmic domain); activates the phosphatase activity towards EGFR. Interacts with TRAF2; probably involved in tumor necrosis factor-mediated signaling. Interacts with MET. Interacts with FAM220A and STAT3; interaction with FAM220A promotes interaction of PTPN2 with transcriptional activator STAT3, leading to dephosphorylation of STAT3 by PTPN2 and negative regulation of STAT3 transcriptional activator activity. Post-translationally, specifically phosphorylated in a cell cycle-dependent manner by cyclin-dependent kinases CDK1 and CDK2. Probably activated through phosphorylation by PKR. Ubiquitously expressed. The highest expression levels were found in ovary, testis, thymus and kidney.

The protein resides in the endoplasmic reticulum. It localises to the endoplasmic reticulum-Golgi intermediate compartment. It is found in the nucleus. Its subcellular location is the cytoplasm. The protein localises to the cell membrane. The catalysed reaction is O-phospho-L-tyrosyl-[protein] + H2O = L-tyrosyl-[protein] + phosphate. In terms of biological role, non-receptor type tyrosine-specific phosphatase that dephosphorylates receptor protein tyrosine kinases including INSR, EGFR, CSF1R, PDGFR. Also dephosphorylates non-receptor protein tyrosine kinases like JAK1, JAK2, JAK3, Src family kinases, STAT1, STAT3 and STAT6 either in the nucleus or the cytoplasm. Negatively regulates numerous signaling pathways and biological processes like hematopoiesis, inflammatory response, cell proliferation and differentiation, and glucose homeostasis. Plays a multifaceted and important role in the development of the immune system. Functions in T-cell receptor signaling through dephosphorylation of FYN and LCK to control T-cells differentiation and activation. Dephosphorylates CSF1R, negatively regulating its downstream signaling and macrophage differentiation. Negatively regulates cytokine (IL2/interleukin-2 and interferon)-mediated signaling through dephosphorylation of the cytoplasmic kinases JAK1, JAK3 and their substrate STAT1, that propagate signaling downstream of the cytokine receptors. Also regulates the IL6/interleukin-6 and IL4/interleukin-4 cytokine signaling through dephosphorylation of STAT3 and STAT6 respectively. In addition to the immune system, it is involved in anchorage-dependent, negative regulation of EGF-stimulated cell growth. Activated by the integrin ITGA1/ITGB1, it dephosphorylates EGFR and negatively regulates EGF signaling. Dephosphorylates PDGFRB and negatively regulates platelet-derived growth factor receptor-beta signaling pathway and therefore cell proliferation. Negatively regulates tumor necrosis factor-mediated signaling downstream via MAPK through SRC dephosphorylation. May also regulate the hepatocyte growth factor receptor signaling pathway through dephosphorylation of the hepatocyte growth factor receptor MET. Also plays an important role in glucose homeostasis. For instance, negatively regulates the insulin receptor signaling pathway through the dephosphorylation of INSR and control gluconeogenesis and liver glucose production through negative regulation of the IL6 signaling pathways. May also bind DNA. In Mus musculus (Mouse), this protein is Tyrosine-protein phosphatase non-receptor type 2 (Ptpn2).